The sequence spans 137 residues: Small ribosomal subunit protein uS12 (137 aa).

Positions 31–41 (MSRKQTNNTAP) are enriched in polar residues. A disordered region spans residues 31 to 57 (MSRKQTNNTAPQKRGVATRVGTMTPKK). Position 102 is a 3-methylthioaspartic acid (Asp-102).

Belongs to the universal ribosomal protein uS12 family. Part of the 30S ribosomal subunit. Contacts proteins S8 and S17. May interact with IF1 in the 30S initiation complex.

In terms of biological role, with S4 and S5 plays an important role in translational accuracy. Interacts with and stabilizes bases of the 16S rRNA that are involved in tRNA selection in the A site and with the mRNA backbone. Located at the interface of the 30S and 50S subunits, it traverses the body of the 30S subunit contacting proteins on the other side and probably holding the rRNA structure together. The combined cluster of proteins S8, S12 and S17 appears to hold together the shoulder and platform of the 30S subunit. This Oenococcus oeni (strain ATCC BAA-331 / PSU-1) protein is Small ribosomal subunit protein uS12.